Here is a 675-residue protein sequence, read N- to C-terminus: Transketolase, chloroplastic (675 aa).

Thiamine diphosphate-binding positions include histidine 78 and 127 to 129 (GPL). Aspartate 168 is a binding site for Mg(2+). Thiamine diphosphate-binding residues include glycine 169, glutamate 173, and asparagine 198. Mg(2+) is bound by residues asparagine 198 and isoleucine 200. A thiamine diphosphate-binding site is contributed by histidine 275. Histidine 275, arginine 369, and serine 396 together coordinate substrate. Thiamine diphosphate contacts are provided by residues glutamate 423 and 450–453 (FTDY). Glutamate 423 acts as the Proton donor in catalysis. Residues histidine 474, aspartate 482, and arginine 533 each contribute to the substrate site.

Homodimer. The cofactor is Mg(2+). It depends on Ca(2+) as a cofactor. Requires Mn(2+) as cofactor. Co(2+) serves as cofactor. Thiamine diphosphate is required as a cofactor.

The protein localises to the plastid. It localises to the chloroplast thylakoid membrane. The catalysed reaction is D-sedoheptulose 7-phosphate + D-glyceraldehyde 3-phosphate = aldehydo-D-ribose 5-phosphate + D-xylulose 5-phosphate. It functions in the pathway carbohydrate biosynthesis; Calvin cycle. In terms of biological role, catalyzes the reversible transfer of a two-carbon ketol group from fructose-6-phosphate or sedoheptulose-7-phosphate to glyceraldehyde-3-phosphate to yield xylulose-5-phosphate and erythrose-4-phosphate or ribose-5-phosphate, respectively. This Zea mays (Maize) protein is Transketolase, chloroplastic.